The chain runs to 135 residues: Ribosome-binding factor A (135 aa).

This sequence belongs to the RbfA family. As to quaternary structure, monomer. Binds 30S ribosomal subunits, but not 50S ribosomal subunits or 70S ribosomes.

It localises to the cytoplasm. In terms of biological role, one of several proteins that assist in the late maturation steps of the functional core of the 30S ribosomal subunit. Associates with free 30S ribosomal subunits (but not with 30S subunits that are part of 70S ribosomes or polysomes). Required for efficient processing of 16S rRNA. May interact with the 5'-terminal helix region of 16S rRNA. The polypeptide is Ribosome-binding factor A (Bartonella tribocorum (strain CIP 105476 / IBS 506)).